The sequence spans 1059 residues: Carbamoyl phosphate synthase large chain (1059 aa).

Residues 1–401 (MPKRTDIKKI…SLLKACRSLE (401 aa)) form a carboxyphosphate synthetic domain region. The ATP site is built by Arg-129, Arg-169, Gly-175, Gly-176, Arg-208, Ile-210, Glu-215, Gly-241, Ile-242, His-243, Gln-284, and Glu-298. Residues 133 to 327 (KQLMEDLEQP…IAKLAAKIAV (195 aa)) enclose the ATP-grasp 1 domain. Gln-284, Glu-298, and Asn-300 together coordinate Mg(2+). Gln-284, Glu-298, and Asn-300 together coordinate Mn(2+). The segment at 402 to 546 (IGVYHNEMPE…YSTYEWENES (145 aa)) is oligomerization domain. A carbamoyl phosphate synthetic domain region spans residues 547-929 (IKSEKESVIV…ALYKAFEASY (383 aa)). The region spanning 671-861 (EQALKDLNIP…MAQIATKLIL (191 aa)) is the ATP-grasp 2 domain. Arg-707, Ser-746, Leu-748, Glu-752, Gly-777, Val-778, His-779, Ser-780, Gln-820, and Glu-832 together coordinate ATP. 3 residues coordinate Mg(2+): Gln-820, Glu-832, and Asn-834. The Mn(2+) site is built by Gln-820, Glu-832, and Asn-834. The 130-residue stretch at 930 to 1059 (FHLPAFGNVI…ESRGFITQAI (130 aa)) folds into the MGS-like domain. The allosteric domain stretch occupies residues 930-1059 (FHLPAFGNVI…ESRGFITQAI (130 aa)).

Belongs to the CarB family. In terms of assembly, composed of two chains; the small (or glutamine) chain promotes the hydrolysis of glutamine to ammonia, which is used by the large (or ammonia) chain to synthesize carbamoyl phosphate. Tetramer of heterodimers (alpha,beta)4. It depends on Mg(2+) as a cofactor. Mn(2+) is required as a cofactor.

It carries out the reaction hydrogencarbonate + L-glutamine + 2 ATP + H2O = carbamoyl phosphate + L-glutamate + 2 ADP + phosphate + 2 H(+). The enzyme catalyses hydrogencarbonate + NH4(+) + 2 ATP = carbamoyl phosphate + 2 ADP + phosphate + 2 H(+). It participates in amino-acid biosynthesis; L-arginine biosynthesis; carbamoyl phosphate from bicarbonate: step 1/1. Its pathway is pyrimidine metabolism; UMP biosynthesis via de novo pathway; (S)-dihydroorotate from bicarbonate: step 1/3. Large subunit of the glutamine-dependent carbamoyl phosphate synthetase (CPSase). CPSase catalyzes the formation of carbamoyl phosphate from the ammonia moiety of glutamine, carbonate, and phosphate donated by ATP, constituting the first step of 2 biosynthetic pathways, one leading to arginine and/or urea and the other to pyrimidine nucleotides. The large subunit (synthetase) binds the substrates ammonia (free or transferred from glutamine from the small subunit), hydrogencarbonate and ATP and carries out an ATP-coupled ligase reaction, activating hydrogencarbonate by forming carboxy phosphate which reacts with ammonia to form carbamoyl phosphate. The protein is Carbamoyl phosphate synthase large chain of Streptococcus mutans serotype c (strain ATCC 700610 / UA159).